The chain runs to 396 residues: L-lactate dehydrogenase (396 aa).

Positions 1–380 (MIISAASDYR…SGDSLVQELG (380 aa)) constitute an FMN hydroxy acid dehydrogenase domain. Tyr24 contacts substrate. FMN contacts are provided by Ser106 and Gln127. Tyr129 contributes to the substrate binding site. Thr155 is an FMN binding site. Position 164 (Arg164) interacts with substrate. Lys251 serves as a coordination point for FMN. His275 functions as the Proton acceptor in the catalytic mechanism. Arg278 provides a ligand contact to substrate. Residue 306–330 (DSGIRNGLDVVRMIALGADTVLLGR) coordinates FMN.

This sequence belongs to the FMN-dependent alpha-hydroxy acid dehydrogenase family. It depends on FMN as a cofactor.

Its subcellular location is the cell inner membrane. It catalyses the reaction (S)-lactate + A = pyruvate + AH2. Its function is as follows. Catalyzes the conversion of L-lactate to pyruvate. Is coupled to the respiratory chain. The chain is L-lactate dehydrogenase from Salmonella enteritidis PT4 (strain P125109).